We begin with the raw amino-acid sequence, 247 residues long: tRNA pseudouridine synthase A (247 aa).

D58 serves as the catalytic Nucleophile. Y116 lines the substrate pocket.

It belongs to the tRNA pseudouridine synthase TruA family. In terms of assembly, homodimer.

It carries out the reaction uridine(38/39/40) in tRNA = pseudouridine(38/39/40) in tRNA. In terms of biological role, formation of pseudouridine at positions 38, 39 and 40 in the anticodon stem and loop of transfer RNAs. The polypeptide is tRNA pseudouridine synthase A (Hydrogenobaculum sp. (strain Y04AAS1)).